A 221-amino-acid chain; its full sequence is Cytochrome c biogenesis ATP-binding export protein CcmA (221 aa).

The ABC transporter domain maps to 14-221 (LACHDVSCLR…FDLLDESHFS (208 aa)). ATP is bound at residue 46 to 53 (GANGIGKS).

Belongs to the ABC transporter superfamily. CcmA exporter (TC 3.A.1.107) family. The complex is composed of two ATP-binding proteins (CcmA) and two transmembrane proteins (CcmB).

It is found in the cell inner membrane. The catalysed reaction is heme b(in) + ATP + H2O = heme b(out) + ADP + phosphate + H(+). Functionally, part of the ABC transporter complex CcmAB involved in the biogenesis of c-type cytochromes; once thought to export heme, this seems not to be the case, but its exact role is uncertain. Responsible for energy coupling to the transport system. In Zymomonas mobilis subsp. mobilis (strain ATCC 31821 / ZM4 / CP4), this protein is Cytochrome c biogenesis ATP-binding export protein CcmA.